Consider the following 551-residue polypeptide: HTH-type transcriptional regulator SgrR (551 aa).

Residues 1–116 (MPSARLQQQF…LVSHLGRSFR (116 aa)) form the HTH marR-type domain. Positions 26–49 (LNELAALLSCSRRHMRTLLNTMQD) form a DNA-binding region, H-T-H motif. The solute-binding stretch occupies residues 163-492 (ELEADIAHHW…IDWQADAARW (330 aa)).

In terms of biological role, activates the small RNA gene sgrS under glucose-phosphate stress conditions as well as yfdZ. Represses its own transcription under both stress and non-stress conditions. Might act as a sensor of the intracellular accumulation of phosphoglucose by binding these molecules in its C-terminal solute-binding domain. This is HTH-type transcriptional regulator SgrR from Shigella sonnei (strain Ss046).